The following is a 388-amino-acid chain: FBD-associated F-box protein At5g60610 (388 aa).

In terms of domain architecture, F-box spans 1–47 (MDRISGLPDELLVKIISFVPTKVAVSTSILSKRWESLWKWVPKLECD). Residues 337-388 (NWKNIQRSVPKCLKSSLKTLEFAGYTARPEERDFLSFIFKKARCLKTSSISH) enclose the FBD domain.

The polypeptide is FBD-associated F-box protein At5g60610 (Arabidopsis thaliana (Mouse-ear cress)).